A 165-amino-acid polypeptide reads, in one-letter code: Cytochrome c-550-like protein (165 aa).

An N-terminal signal peptide occupies residues 1 to 30; it reads MLNKSLLIRFVLTILIIVQVIIFDTQPVQA. Residues cysteine 75, cysteine 78, histidine 79, and cysteine 129 each coordinate heme c.

This sequence belongs to the cytochrome c family. PsbV subfamily. It depends on heme c as a cofactor.

It is found in the cellular thylakoid membrane. In terms of biological role, possible low-potential cytochrome c. The sequence is that of Cytochrome c-550-like protein (psbV2) from Trichodesmium erythraeum (strain IMS101).